We begin with the raw amino-acid sequence, 304 residues long: Protein phosphatase PTC7 homolog (304 aa).

The N-terminal 68 residues, 1–68 (MFSVLSYGRL…GDDACFVARH (68 aa)), are a transit peptide targeting the mitochondrion. The 231-residue stretch at 69-299 (RSADVLGVAD…DDITVLLSIV (231 aa)) folds into the PPM-type phosphatase domain. Asp-78, Gly-79, and Asp-223 together coordinate Mn(2+).

This sequence belongs to the PP2C family. As to quaternary structure, interacts with FBXL4, BNIP3 and NIX; these interactions are important for ubiquitination and degradation of BNIP3 and NIX. Mg(2+) is required as a cofactor. Mn(2+) serves as cofactor. As to expression, expressed in keratinocytes (at protein level).

It localises to the mitochondrion matrix. It catalyses the reaction O-phospho-L-seryl-[protein] + H2O = L-seryl-[protein] + phosphate. The catalysed reaction is O-phospho-L-threonyl-[protein] + H2O = L-threonyl-[protein] + phosphate. Its activity is regulated as follows. Inhibited by sodium orthovanadate. In terms of biological role, protein phosphatase that plays an essential role in mitochondrial metabolism and biogenesis. Positively regulates biosynthesis of the ubiquinone, coenzyme Q. Dephosphorylates the ubiquinone biosynthesis protein COQ7 which is likely to lead to its activation. Serves as a crucial sensor for mitophagy, though the underlying mechanism remains ambiguous. May dephosphorylate BNIP3 and NIX and thereby directly regulates mitophagy receptor function and stability. Alternatively, promotes SCF-FBXL4-dependent ubiquitination and degradation of BNIP3 and NIX independently of its catalytic activity to restrain mitophagy. This is Protein phosphatase PTC7 homolog (PPTC7) from Homo sapiens (Human).